The sequence spans 367 residues: Nodulation protein 10 (367 aa).

11 consecutive transmembrane segments (helical) span residues 15–37 (FDLLRLFAACQVMFSHAWNWLHL), 46–66 (VFDLLFSAPGVAIFFLISGFL), 88–108 (IFPALFVNIAVMELALLVTGG), 109–129 (LNVTGILQYLFYFTVYILTAA), 155–175 (VLWTLTVELTFYLTLPMLLEI), 183–203 (GALVVAVAALGSWVMAQHFNI), 208–228 (NPFLSVTAGPTFWIFSMGVLA), 245–265 (WWLATHLAITWWVAGTSAAFI), 270–290 (AAPVDAFRIAVLAGLVLSAAH), 312–332 (MLVMHTLIAIGWVGHWWLWIV), and 335–355 (VGTVALAALSWALIEQPAMKL).

The protein belongs to the acyltransferase 3 family.

It localises to the cell membrane. Its function is as follows. Not known. NodX allows Rhizobium leguminosarum biovar viciae strain TOM to nodulate Afghanistan peas. This is Nodulation protein 10 (nodX) from Rhizobium leguminosarum bv. viciae.